Consider the following 223-residue polypeptide: Triosephosphate isomerase (223 aa).

Residue 6–8 (NLK) coordinates substrate. The active-site Electrophile is His86. Glu151 acts as the Proton acceptor in catalysis. 2 residues coordinate substrate: Gly157 and Ser187.

Belongs to the triosephosphate isomerase family. Homodimer.

It is found in the cytoplasm. The enzyme catalyses D-glyceraldehyde 3-phosphate = dihydroxyacetone phosphate. The protein operates within carbohydrate biosynthesis; gluconeogenesis. It participates in carbohydrate degradation; glycolysis; D-glyceraldehyde 3-phosphate from glycerone phosphate: step 1/1. Functionally, involved in the gluconeogenesis. Catalyzes stereospecifically the conversion of dihydroxyacetone phosphate (DHAP) to D-glyceraldehyde-3-phosphate (G3P). This Campylobacter jejuni subsp. jejuni serotype O:2 (strain ATCC 700819 / NCTC 11168) protein is Triosephosphate isomerase.